The following is a 74-amino-acid chain: Progonadoliberin-3 (74 aa).

The signal sequence occupies residues Val1–Ser15. Residue Gln16 is modified to Pyrrolidone carboxylic acid. Gly25 is subject to Glycine amide.

Belongs to the GnRH family.

It localises to the secreted. Its function is as follows. Stimulates the secretion of gonadotropins. The chain is Progonadoliberin-3 (gnrh3) from Oncorhynchus tshawytscha (Chinook salmon).